The following is a 273-amino-acid chain: Putative pyruvate, phosphate dikinase regulatory protein (273 aa).

149-156 (GPSRTSKT) is a binding site for ADP.

The protein belongs to the pyruvate, phosphate/water dikinase regulatory protein family. PDRP subfamily.

It catalyses the reaction N(tele)-phospho-L-histidyl/L-threonyl-[pyruvate, phosphate dikinase] + ADP = N(tele)-phospho-L-histidyl/O-phospho-L-threonyl-[pyruvate, phosphate dikinase] + AMP + H(+). The catalysed reaction is N(tele)-phospho-L-histidyl/O-phospho-L-threonyl-[pyruvate, phosphate dikinase] + phosphate + H(+) = N(tele)-phospho-L-histidyl/L-threonyl-[pyruvate, phosphate dikinase] + diphosphate. Bifunctional serine/threonine kinase and phosphorylase involved in the regulation of the pyruvate, phosphate dikinase (PPDK) by catalyzing its phosphorylation/dephosphorylation. The chain is Putative pyruvate, phosphate dikinase regulatory protein from Rickettsia felis (strain ATCC VR-1525 / URRWXCal2) (Rickettsia azadi).